A 427-amino-acid polypeptide reads, in one-letter code: Peptidase B (427 aa).

Mn(2+) is bound by residues Lys195 and Asp200. The active site involves Lys207. The Mn(2+) site is built by Asp218, Asp277, and Glu279. Arg281 is an active-site residue.

Belongs to the peptidase M17 family. In terms of assembly, homohexamer. The cofactor is Mn(2+).

It is found in the cytoplasm. It carries out the reaction Release of an N-terminal amino acid, Xaa, from a peptide or arylamide. Xaa is preferably Glu or Asp but may be other amino acids, including Leu, Met, His, Cys and Gln.. In terms of biological role, probably plays an important role in intracellular peptide degradation. The protein is Peptidase B of Shigella boydii serotype 18 (strain CDC 3083-94 / BS512).